Reading from the N-terminus, the 479-residue chain is UDP-N-acetylmuramate--L-alanine ligase (479 aa).

Residue 115 to 121 (GTHGKTT) participates in ATP binding.

Belongs to the MurCDEF family.

The protein localises to the cytoplasm. It carries out the reaction UDP-N-acetyl-alpha-D-muramate + L-alanine + ATP = UDP-N-acetyl-alpha-D-muramoyl-L-alanine + ADP + phosphate + H(+). The protein operates within cell wall biogenesis; peptidoglycan biosynthesis. In terms of biological role, cell wall formation. The protein is UDP-N-acetylmuramate--L-alanine ligase of Acidiphilium cryptum (strain JF-5).